The chain runs to 219 residues: UPF0173 metal-dependent hydrolase LSL_0324 (219 aa).

It belongs to the UPF0173 family.

This chain is UPF0173 metal-dependent hydrolase LSL_0324, found in Ligilactobacillus salivarius (strain UCC118) (Lactobacillus salivarius).